The sequence spans 381 residues: Molybdenum import ATP-binding protein ModC (381 aa).

Residues 5 to 238 form the ABC transporter domain; sequence SRSIQAQFRG…PALPLAASRD (234 aa). ATP is bound at residue 37 to 44; it reads GPSGCGKS. The Mop domain occupies 297-367; the sequence is NTSILNVLPA…VKGVALAPGR (71 aa).

Belongs to the ABC transporter superfamily. Molybdate importer (TC 3.A.1.8) family. In terms of assembly, the complex is composed of two ATP-binding proteins (ModC), two transmembrane proteins (ModB) and a solute-binding protein (ModA).

The protein resides in the cell inner membrane. It carries out the reaction molybdate(out) + ATP + H2O = molybdate(in) + ADP + phosphate + H(+). Functionally, part of the ABC transporter complex ModABC involved in molybdenum import. Responsible for energy coupling to the transport system. The sequence is that of Molybdenum import ATP-binding protein ModC from Rhodopseudomonas palustris (strain BisB18).